A 434-amino-acid chain; its full sequence is Beta-enolase (434 aa).

A2 is modified (N-acetylalanine). T72 is modified (phosphothreonine). Phosphoserine occurs at positions 83 and 157. Substrate contacts are provided by H158 and E167. S176 bears the Phosphoserine mark. T205 is modified (phosphothreonine). The active-site Proton donor is E210. The residue at position 229 (T229) is a Phosphothreonine. A Phosphotyrosine modification is found at Y236. Mg(2+) is bound at residue D245. Residue S263 is modified to Phosphoserine. The substrate site is built by E293 and D318. Positions 293 and 318 each coordinate Mg(2+). K343 (proton acceptor) is an active-site residue. Substrate contacts are provided by residues 370–373 (SHRS) and K394.

The protein belongs to the enolase family. Mammalian enolase is composed of 3 isozyme subunits, alpha, beta and gamma, which can form homodimers or heterodimers which are cell-type and development-specific. In vitro, interacts with several glycolytic enzymes including PKM, PGM, CKM and ALDO. Also binds PLG and troponin, in vitro. Interacts with PNKD. Mg(2+) is required as a cofactor. In terms of tissue distribution, brain (at protein level). The alpha/alpha homodimer is expressed in embryo and in most adult tissues. The alpha/beta heterodimer and the beta/beta homodimer are found in striated muscle, and the alpha/gamma heterodimer and the gamma/gamma homodimer in neurons. In striated muscle, the fiber-type order of ENO3 expression is IIB &gt; IIX &gt; IIA &gt; I.

It localises to the cytoplasm. It carries out the reaction (2R)-2-phosphoglycerate = phosphoenolpyruvate + H2O. The protein operates within carbohydrate degradation; glycolysis; pyruvate from D-glyceraldehyde 3-phosphate: step 4/5. Functionally, glycolytic enzyme that catalyzes the conversion of 2-phosphoglycerate to phosphoenolpyruvate. Appears to have a function in striated muscle development and regeneration. This chain is Beta-enolase (Eno3), found in Mus musculus (Mouse).